We begin with the raw amino-acid sequence, 238 residues long: Purine nucleoside phosphorylase DeoD-type (238 aa).

Position 4 (H4) interacts with a purine D-ribonucleoside. Phosphate contacts are provided by residues G20, R24, R43, and 87 to 90 (RVGS). A purine D-ribonucleoside-binding positions include 179-181 (EME) and 203-204 (SD). The Proton donor role is filled by D204.

This sequence belongs to the PNP/UDP phosphorylase family. In terms of assembly, homohexamer; trimer of homodimers.

The catalysed reaction is a purine D-ribonucleoside + phosphate = a purine nucleobase + alpha-D-ribose 1-phosphate. It carries out the reaction a purine 2'-deoxy-D-ribonucleoside + phosphate = a purine nucleobase + 2-deoxy-alpha-D-ribose 1-phosphate. Catalyzes the reversible phosphorolytic breakdown of the N-glycosidic bond in the beta-(deoxy)ribonucleoside molecules, with the formation of the corresponding free purine bases and pentose-1-phosphate. The polypeptide is Purine nucleoside phosphorylase DeoD-type (Haemophilus ducreyi (strain 35000HP / ATCC 700724)).